Reading from the N-terminus, the 159-residue chain is Putative ribosomal RNA large subunit methyltransferase H (159 aa).

Residues Leu-76, Gly-108, and 127–132 contribute to the S-adenosyl-L-methionine site; that span reads LSPLTF.

It belongs to the RNA methyltransferase RlmH family.

Its subcellular location is the cytoplasm. The enzyme catalyses pseudouridine(1915) in 23S rRNA + S-adenosyl-L-methionine = N(3)-methylpseudouridine(1915) in 23S rRNA + S-adenosyl-L-homocysteine + H(+). Its function is as follows. Specifically methylates the pseudouridine at position 1915 (m3Psi1915) in 23S rRNA. This is Putative ribosomal RNA large subunit methyltransferase H from Methanoregula boonei (strain DSM 21154 / JCM 14090 / 6A8).